Here is a 283-residue protein sequence, read N- to C-terminus: Bifunctional protein FolD (283 aa).

Residues 165 to 167 (GRS), S190, and I231 each bind NADP(+).

Belongs to the tetrahydrofolate dehydrogenase/cyclohydrolase family. Homodimer.

The catalysed reaction is (6R)-5,10-methylene-5,6,7,8-tetrahydrofolate + NADP(+) = (6R)-5,10-methenyltetrahydrofolate + NADPH. The enzyme catalyses (6R)-5,10-methenyltetrahydrofolate + H2O = (6R)-10-formyltetrahydrofolate + H(+). The protein operates within one-carbon metabolism; tetrahydrofolate interconversion. Catalyzes the oxidation of 5,10-methylenetetrahydrofolate to 5,10-methenyltetrahydrofolate and then the hydrolysis of 5,10-methenyltetrahydrofolate to 10-formyltetrahydrofolate. This is Bifunctional protein FolD from Janthinobacterium sp. (strain Marseille) (Minibacterium massiliensis).